Consider the following 519-residue polypeptide: MANNIKTKITRFGYIVNKNLIDDETIKEIKSDLTVVPFKINNYAPKYIKNEGFPLYVENGNYIGIPKYYGFDKLGEPDIDKVSNYEYPVQDMTYTGTLRPHQQMVSDKIIKGMEEGGGGVLVMGCGSGKTNVAIYIACKFKLRTLFVVHKTFLRDQVIDRIKSNTNVKKVGIIQRKIVNYKHPFVVSMVQSLAKINYNDEIFKDFGMIIIDEVHHMGARNFSTVYQKISSKYMLGISAEYTRTDGMYKIINWYMGPILHLEEQKPNEMVIVKQFYYSTSNKERIKMKYINGDTNKPNRSKMITNLFYIKRRNRFILYLIQELFDMGKNILFLSGRLKQIDLLYELLNNDEFTHGNVGKYIGGMKESSLKKSAMKQIILGSYDMASEGLDIEGLNVVILGTPKTSIKQSVGRILRKEVYEEHPIVIDIVDVDNDTFKKQSKSRNNYFQKQKYNIQKYYISESLKQKYELWNDKEYIKKVLVEIPEIPDKQTQDMIKTNPNPKKKYQGPINIDELNFLEDD.

Residues 110 to 258 (IKGMEEGGGG…IINWYMGPIL (149 aa)) enclose the Helicase ATP-binding domain. 123–130 (MGCGSGKT) is a binding site for ATP. A DEAH box motif is present at residues 211-214 (DEVH). A Helicase C-terminal domain is found at 317-457 (YLIQELFDMG…KQKYNIQKYY (141 aa)).

This sequence belongs to the DEAD box helicase family. DEAH subfamily.

The catalysed reaction is ATP + H2O = ADP + phosphate + H(+). In Acanthamoeba polyphaga (Amoeba), this protein is Putative ATP-dependent RNA helicase L396.